The following is a 584-amino-acid chain: Gag-Pro polyprotein (584 aa).

Gly2 carries the N-myristoyl glycine; by host lipid modification. The interval 93–117 (AREAPPSAPPADDPQKPPPYPEHAQ) is disordered. A PTAP/PSAP motif motif is present at residues 98–101 (PSAP). The span at 98–113 (PSAPPADDPQKPPPYP) shows a compositional bias: pro residues. Residues 109–112 (PPPY) carry the PPXY motif motif. CCHC-type zinc fingers lie at residues 349 to 366 (QPCF…DCKQ) and 372 to 389 (GPCP…DCPQ). Residues 457-535 (VQALLDTGAD…DQWTILGRDA (79 aa)) enclose the Peptidase A2 domain. The For protease activity; shared with dimeric partner role is filled by Asp462. Residues 564 to 584 (EHLPPPPEVSQFPLNRSASRP) form a disordered region. Over residues 575–584 (FPLNRSASRP) the composition is skewed to polar residues.

In terms of assembly, interacts with human TSG101. This interaction is essential for budding and release of viral particles. In terms of processing, specific enzymatic cleavages by the viral protease yield mature proteins. The polyprotein is cleaved during and after budding, this process is termed maturation. The protease is autoproteolytically processed at its N- and C-termini.

The protein resides in the virion. Functionally, matrix protein p19 targets Gag, Gag-Pro and Gag-Pro-Pol polyproteins to the plasma membrane via a multipartite membrane binding signal, that includes its myristoylated N-terminus. Also mediates nuclear localization of the preintegration complex. Its function is as follows. Capsid protein p24 forms the conical core of the virus that encapsulates the genomic RNA-nucleocapsid complex. In terms of biological role, nucleocapsid protein p15 is involved in the packaging and encapsidation of two copies of the genome. The aspartyl protease mediates proteolytic cleavages of Gag, Gag-Pro and Gag-Pro-Pol polyproteins during or shortly after the release of the virion from the plasma membrane. Cleavages take place as an ordered, step-wise cascade to yield mature proteins. This process is called maturation. Displays maximal activity during the budding process just prior to particle release from the cell. Hydrolyzes host EIF4GI in order to shut off the capped cellular mRNA translation. The resulting inhibition of cellular protein synthesis serves to ensure maximal viral gene expression and to evade host immune response. This Human T-cell leukemia virus 3 (strain Pyl43) (HTLV-3) protein is Gag-Pro polyprotein (gag-pro).